Consider the following 1399-residue polypeptide: DNA-directed RNA polymerase subunit beta' (1399 aa).

Cysteine 71, cysteine 73, cysteine 86, and cysteine 89 together coordinate Zn(2+). 3 residues coordinate Mg(2+): aspartate 462, aspartate 464, and aspartate 466. Zn(2+) contacts are provided by cysteine 810, cysteine 884, cysteine 891, and cysteine 894. The segment at 1376–1399 is disordered; it reads EREKQAAITPAAPEAEPLALPPAE.

The protein belongs to the RNA polymerase beta' chain family. The RNAP catalytic core consists of 2 alpha, 1 beta, 1 beta' and 1 omega subunit. When a sigma factor is associated with the core the holoenzyme is formed, which can initiate transcription. The cofactor is Mg(2+). Zn(2+) serves as cofactor.

The enzyme catalyses RNA(n) + a ribonucleoside 5'-triphosphate = RNA(n+1) + diphosphate. Its function is as follows. DNA-dependent RNA polymerase catalyzes the transcription of DNA into RNA using the four ribonucleoside triphosphates as substrates. In Afipia carboxidovorans (strain ATCC 49405 / DSM 1227 / KCTC 32145 / OM5) (Oligotropha carboxidovorans), this protein is DNA-directed RNA polymerase subunit beta'.